Here is a 197-residue protein sequence, read N- to C-terminus: Large ribosomal subunit protein eL15 (197 aa).

3 stretches are compositionally biased toward basic residues: residues 70 to 90, 163 to 179, and 187 to 197; these read PKGGRRKSRPKKGRRPKRMGK, RGKTGAGKKARGLRKRG, and PSLRAHRRRGK. 2 disordered regions span residues 70–99 and 163–197; these read PKGGRRKSRPKKGRRPKRMGKNKFSPGKSK and RGKTGAGKKARGLRKRGKGAEKVRPSLRAHRRRGK.

The protein belongs to the eukaryotic ribosomal protein eL15 family.

This is Large ribosomal subunit protein eL15 from Methanopyrus kandleri (strain AV19 / DSM 6324 / JCM 9639 / NBRC 100938).